A 615-amino-acid polypeptide reads, in one-letter code: 3-(3-hydroxy-phenyl)propionate/3-hydroxycinnamic acid hydroxylase 1 (615 aa).

The disordered stretch occupies residues 1 to 20; that stretch reads MRPAFEPAAGLGRAHPHETT. FAD-binding positions include 27–56 and 294–304; these read DVAI…VVEK and FRVKRILLAGD.

It belongs to the PheA/TfdB FAD monooxygenase family. The cofactor is FAD.

It carries out the reaction 3-(3-hydroxyphenyl)propanoate + NADH + O2 + H(+) = 3-(2,3-dihydroxyphenyl)propanoate + NAD(+) + H2O. It catalyses the reaction (2E)-3-(3-hydroxyphenyl)prop-2-enoate + NADH + O2 + H(+) = (2E)-3-(2,3-dihydroxyphenyl)prop-2-enoate + NAD(+) + H2O. It functions in the pathway aromatic compound metabolism; 3-phenylpropanoate degradation. Catalyzes the insertion of one atom of molecular oxygen into position 2 of the phenyl ring of 3-(3-hydroxyphenyl)propionate (3-HPP) and hydroxycinnamic acid (3HCI). The chain is 3-(3-hydroxy-phenyl)propionate/3-hydroxycinnamic acid hydroxylase 1 from Burkholderia vietnamiensis (strain G4 / LMG 22486) (Burkholderia cepacia (strain R1808)).